A 288-amino-acid chain; its full sequence is MSQFSFTKMHGLGNSYIYVNMFEEQIPEEDLALVAEKVSNINTGIGADGMILICPSDVAPVKMRMFNNDGSEGKSCGNGLRCVAKYAYEHKLVEDTVFTIETLAGIVTAEVTVEEGKVTLAKIDMGAPRLTRAEIPMLGEGETPFIRENFLYNNHRYAFTAVSMGNPHAVIFVDDVEQAPLTTLGPVLETHEMFPERVNVEFIEILNEEEMNFRVWERGSGVTQACGTGACAAVVASILNGKMERGKEITVHLAGGDLMIAWTEEGNVLMKGPAEVICRGVYEYKIEA.

Substrate-binding residues include asparagine 14 and asparagine 67. Catalysis depends on cysteine 76, which acts as the Proton donor. Substrate-binding positions include glycine 77–asparagine 78, asparagine 166, asparagine 199, and glutamate 217–arginine 218. Cysteine 226 functions as the Proton acceptor in the catalytic mechanism. Glycine 227–threonine 228 is a substrate binding site.

Belongs to the diaminopimelate epimerase family. Homodimer.

The protein resides in the cytoplasm. It carries out the reaction (2S,6S)-2,6-diaminopimelate = meso-2,6-diaminopimelate. It functions in the pathway amino-acid biosynthesis; L-lysine biosynthesis via DAP pathway; DL-2,6-diaminopimelate from LL-2,6-diaminopimelate: step 1/1. Catalyzes the stereoinversion of LL-2,6-diaminopimelate (L,L-DAP) to meso-diaminopimelate (meso-DAP), a precursor of L-lysine and an essential component of the bacterial peptidoglycan. This chain is Diaminopimelate epimerase, found in Bacillus anthracis (strain A0248).